The following is a 1486-amino-acid chain: Protein PRRC2B (1486 aa).

Disordered regions lie at residues 1 to 20 (MSDR…KYST), 39 to 306 (VIPR…FPLP), 320 to 341 (QMND…PLRQ), 385 to 519 (KFSD…AREE), and 531 to 658 (LDQK…EQLY). Residues 88–137 (ANKQDQQDPKSSSVTASQPPESQPQPGLQKSVSNLQKPTQSISQENTNSV) show a composition bias toward polar residues. Phosphoserine occurs at positions 166, 168, 222, and 226. Positions 219-235 (SAASLSASPTELGSRNA) are enriched in polar residues. Residue Thr-228 is modified to Phosphothreonine. Lys-251 participates in a covalent cross-link: Glycyl lysine isopeptide (Lys-Gly) (interchain with G-Cter in SUMO2). Polar residues predominate over residues 288 to 300 (SPQSSENQTTVER). Residues Ser-387 and Ser-415 each carry the phosphoserine modification. 3 stretches are compositionally biased toward basic and acidic residues: residues 422–433 (TDAKRTQEEGKD), 478–488 (HSAEDKEDKPP), and 501–519 (AVER…AREE). The residue at position 479 (Ser-479) is a Phosphoserine. The stretch at 494–544 (IQSEMSEAVERARKRREEEERRAREERLAACAAKLKQLDQKCRQAQKANET) forms a coiled coil. Ser-555 is modified (phosphoserine). Low complexity predominate over residues 600 to 611 (SNSSSSSSSSSS). At Ser-621 the chain carries Phosphoserine. The span at 638 to 656 (QRQQQQQQQQQQQQQQQEQ) shows a compositional bias: low complexity. Lys-751 is covalently cross-linked (Glycyl lysine isopeptide (Lys-Gly) (interchain with G-Cter in SUMO2)). Thr-753 is subject to Phosphothreonine. Phosphoserine occurs at positions 762 and 793. 3 disordered regions span residues 792–847 (RSPD…EARK), 893–918 (EERR…IPPR), and 950–1080 (ALPV…PGAV). The stretch at 880-904 (IEVLTKKQRRLLEEERRKKEQAAQV) forms a coiled coil. Positions 960-986 (SWRTAVTAFSSTEPGTSEQGFKSSQGD) are enriched in polar residues. A compositionally biased stretch (low complexity) spans 998 to 1007 (SSATSSQRSS). Basic and acidic residues-rich tracts occupy residues 1025 to 1055 (SKAD…EHRP) and 1062 to 1074 (RSLK…EGAE). A phosphoserine mark is found at Ser-1070 and Ser-1159. Disordered stretches follow at residues 1177–1205 (KAWE…SSVG), 1410–1443 (QSIQ…TSRE), and 1455–1486 (ADSK…AWEP). Positions 1181-1191 (NSPSLPEQSSP) are enriched in polar residues. A compositionally biased stretch (low complexity) spans 1410–1421 (QSIQLPPGQSLS). Residues 1457–1474 (SKQNVPTGGSAPSPQAYR) show a composition bias toward polar residues.

The protein is Protein PRRC2B (Prrc2b) of Mus musculus (Mouse).